A 237-amino-acid chain; its full sequence is Pheromone-regulated membrane protein 8 (237 aa).

At 1–47 the chain is on the cytoplasmic side; it reads MQTPSENTNAKSDSLDEPGAYLIEENVALPKDIFHSYLSYWIYEAAH. Residues 48-68 form a helical membrane-spanning segment; that stretch reads CTPVMLLSLVIGVLISIIILF. The Extracellular segment spans residues 69–74; that stretch reads HDNENC. A helical membrane pass occupies residues 75–95; the sequence is VGVSVGFLLIFSGILVIVLIL. Over 96–237 the chain is Cytoplasmic; the sequence is RFGPQISDED…QEYPGVDEFF (142 aa). The tract at residues 174-201 is disordered; that stretch reads SSASNVKDAQSNDETAGTPNEAAESSSF. The COPII binding stretch occupies residues 236-237; sequence FF.

It belongs to the DUP/COS family. In terms of assembly, interacts with PRM9. Binds to SEC23/24 of COPII coated vesicles.

The protein localises to the membrane. Its subcellular location is the endoplasmic reticulum. May be involved in endoplasmic reticulum exit trafficking of proteins. This Saccharomyces cerevisiae (strain ATCC 204508 / S288c) (Baker's yeast) protein is Pheromone-regulated membrane protein 8 (PRM8).